The chain runs to 124 residues: CD59 glycoprotein (124 aa).

The first 24 residues, 1 to 24 (MTSRGVHLLLRLLFLLAVFYSSDS), serve as a signal peptide directing secretion. One can recognise a UPAR/Ly6 domain in the interval 25–101 (SLMCYHCLLP…DLCNGPEDDG (77 aa)). Disulfide bonds link cysteine 28–cysteine 51, cysteine 31–cysteine 38, cysteine 44–cysteine 64, cysteine 70–cysteine 88, and cysteine 89–cysteine 94. The N-linked (GlcNAc...) asparagine glycan is linked to asparagine 37. The GPI-anchor amidated glycine moiety is linked to residue glycine 101. The propeptide at 102-124 (TALTGRTVLLVAPLLAAARNLCL) is removed in mature form.

Interacts with T-cell surface antigen CD2. Post-translationally, N- and O-glycosylated.

The protein resides in the cell membrane. It is found in the secreted. Functionally, potent inhibitor of the complement membrane attack complex (MAC) action, which protects self-cells from damage during complement activation. Acts by binding to the beta-haipins of C8 (C8A and C8B) components of the assembling MAC, forming an intermolecular beta-sheet that prevents incorporation of the multiple copies of C9 required for complete formation of the osmolytic pore. In Oryctolagus cuniculus (Rabbit), this protein is CD59 glycoprotein.